A 121-amino-acid polypeptide reads, in one-letter code: Large ribosomal subunit protein uL18 (121 aa).

Belongs to the universal ribosomal protein uL18 family. As to quaternary structure, part of the 50S ribosomal subunit; part of the 5S rRNA/L5/L18/L25 subcomplex. Contacts the 5S and 23S rRNAs.

Its function is as follows. This is one of the proteins that bind and probably mediate the attachment of the 5S RNA into the large ribosomal subunit, where it forms part of the central protuberance. The polypeptide is Large ribosomal subunit protein uL18 (Burkholderia multivorans (strain ATCC 17616 / 249)).